Consider the following 1167-residue polypeptide: Melanoma receptor tyrosine-protein kinase (1167 aa).

An N-terminal signal peptide occupies residues Met-1 to Thr-25. Residues Asp-26–Ser-642 lie on the Extracellular side of the membrane. Residues Asn-114, Asn-144, and Asn-201 are each glycosylated (N-linked (GlcNAc...) asparagine). 11 disulfide bridges follow: Cys-195–Cys-204, Cys-199–Cys-212, Cys-220–Cys-228, Cys-224–Cys-236, Cys-237–Cys-245, Cys-241–Cys-253, Cys-256–Cys-265, Cys-269–Cys-296, Cys-300–Cys-311, Cys-315–Cys-330, and Cys-333–Cys-337. Asn-356, Asn-365, Asn-398, Asn-417, and Asn-501 each carry an N-linked (GlcNAc...) asparagine glycan. 9 disulfides stabilise this stretch: Cys-504-Cys-513, Cys-508-Cys-521, Cys-524-Cys-533, Cys-537-Cys-553, Cys-556-Cys-569, Cys-560-Cys-577, Cys-593-Cys-615, Cys-618-Cys-626, and Cys-622-Cys-634. A glycan (N-linked (GlcNAc...) asparagine) is linked at Asn-576. Asn-621 is a glycosylation site (N-linked (GlcNAc...) asparagine). A helical membrane pass occupies residues Ser-643–Leu-665. Residues Leu-666 to Arg-1167 lie on the Cytoplasmic side of the membrane. A Protein kinase domain is found at Phe-710–Leu-977. ATP contacts are provided by residues Leu-716–Val-724 and Lys-743. Asp-835 functions as the Proton acceptor in the catalytic mechanism.

This sequence belongs to the protein kinase superfamily. Tyr protein kinase family. EGF receptor subfamily.

The protein localises to the membrane. It catalyses the reaction L-tyrosyl-[protein] + ATP = O-phospho-L-tyrosyl-[protein] + ADP + H(+). Functionally, probable receptor with tyrosine-protein kinase activity. The chain is Melanoma receptor tyrosine-protein kinase (xmrk) from Xiphophorus maculatus (Southern platyfish).